A 140-amino-acid chain; its full sequence is Putative peptidyl-tRNA hydrolase PTRHD1 (140 aa).

This sequence belongs to the PTH2 family. PTRHD1 subfamily.

The catalysed reaction is an N-acyl-L-alpha-aminoacyl-tRNA + H2O = an N-acyl-L-amino acid + a tRNA + H(+). Functionally, as a putative peptidyl-tRNA hydrolase, it might be involved in releasing tRNAs from the ribosome during protein synthesis. Some evidence, however, suggests that it lacks peptidyl-tRNA hydrolase activity. The sequence is that of Putative peptidyl-tRNA hydrolase PTRHD1 (Ptrhd1) from Mus musculus (Mouse).